We begin with the raw amino-acid sequence, 1466 residues long: DNA-directed RNA polymerase subunit beta'' (1466 aa).

The Zn(2+) site is built by Cys-220, Cys-296, Cys-303, and Cys-306. A disordered region spans residues 618-725; the sequence is TREEDLEDEY…EDEYDSSEED (108 aa). Acidic residues-rich tracts occupy residues 621–631, 639–651, and 707–725; these read EDLEDEYETLE, DEYE…DEYG, and LEED…SEED.

The protein belongs to the RNA polymerase beta' chain family. RpoC2 subfamily. In plastids the minimal PEP RNA polymerase catalytic core is composed of four subunits: alpha, beta, beta', and beta''. When a (nuclear-encoded) sigma factor is associated with the core the holoenzyme is formed, which can initiate transcription. Zn(2+) is required as a cofactor.

Its subcellular location is the plastid. It is found in the chloroplast. It carries out the reaction RNA(n) + a ribonucleoside 5'-triphosphate = RNA(n+1) + diphosphate. Its function is as follows. DNA-dependent RNA polymerase catalyzes the transcription of DNA into RNA using the four ribonucleoside triphosphates as substrates. The chain is DNA-directed RNA polymerase subunit beta'' from Agrostis stolonifera (Creeping bentgrass).